A 445-amino-acid chain; its full sequence is Phosphoglucosamine mutase (445 aa).

The active-site Phosphoserine intermediate is S103. Mg(2+) contacts are provided by S103, D240, D242, and D244. A Phosphoserine modification is found at S103.

This sequence belongs to the phosphohexose mutase family. Mg(2+) serves as cofactor. Post-translationally, activated by phosphorylation.

It carries out the reaction alpha-D-glucosamine 1-phosphate = D-glucosamine 6-phosphate. Its function is as follows. Catalyzes the conversion of glucosamine-6-phosphate to glucosamine-1-phosphate. The polypeptide is Phosphoglucosamine mutase (Cellvibrio japonicus (strain Ueda107) (Pseudomonas fluorescens subsp. cellulosa)).